The sequence spans 243 residues: MAVVTLAELLEAGVHFGHQSRRWNPKMFPYIYAERNGIHIIDLVQTAQLLTQACDFVRTASEQGKSFLFVGTKRQAAAVVAQEAERCGAYYVNQRWLGGILTNWFTIRTRVERLKDLENKEESGYLDQLPKKETAILRRELEKLRKNLDGIKTMKRLPDLVVVVDQKRESTAVQECRKLGIPIVSILDTNCNPELADIPIPANDDAIRSIKLILGKIADSISEGNNGKVSSDQEDTQELQTVQ.

Residues 224-243 (GNNGKVSSDQEDTQELQTVQ) form a disordered region.

The protein belongs to the universal ribosomal protein uS2 family.

Its subcellular location is the plastid. The protein localises to the chloroplast. The chain is Small ribosomal subunit protein uS2c (rps2) from Rhodomonas salina (Cryptomonas salina).